Consider the following 199-residue polypeptide: dITP/XTP pyrophosphatase (199 aa).

7–12 (SNNPGK) contacts substrate. Asp68 serves as the catalytic Proton acceptor. Asp68 provides a ligand contact to Mg(2+). Substrate is bound by residues Ala69, 154-157 (FGFD), Lys177, and 182-183 (HR).

The protein belongs to the HAM1 NTPase family. In terms of assembly, homodimer. Mg(2+) is required as a cofactor.

The enzyme catalyses XTP + H2O = XMP + diphosphate + H(+). It carries out the reaction dITP + H2O = dIMP + diphosphate + H(+). It catalyses the reaction ITP + H2O = IMP + diphosphate + H(+). Its function is as follows. Pyrophosphatase that catalyzes the hydrolysis of nucleoside triphosphates to their monophosphate derivatives, with a high preference for the non-canonical purine nucleotides XTP (xanthosine triphosphate), dITP (deoxyinosine triphosphate) and ITP. Seems to function as a house-cleaning enzyme that removes non-canonical purine nucleotides from the nucleotide pool, thus preventing their incorporation into DNA/RNA and avoiding chromosomal lesions. This Verminephrobacter eiseniae (strain EF01-2) protein is dITP/XTP pyrophosphatase.